The primary structure comprises 375 residues: MSQRDYYEVLGVSRDAADDEIKRAYRKKAMEFHPDRNPDNPEAEAKFKEAAEAYDVLRDAEKRARYDRFGHAGVNGNGYGGGGGFSSTEDIFAHFGDIFGDLFGFAGMGGARGPRPQAGSDLRYNLNISFRQAARGDEVTLRIPKNVTCPDCSGSGAAPGTQPETCPQCGGSGQVVRQQGFFQMAMPCSACRGEGRIVRNPCPRCRGAGQVQDIRELSVRIPAGVDTGNRLRLRGEGEPGVHGGPPGDLYVVIRVDDDKTFRRQGQDLVVRKEISFVQAILGDKVEVPTLDDPVTVDIPRGTQSGEVFRIAGKGLPHLGSSQTGALLVEVTVRIPSSVNDEQEKLLREFERLEENRPLRKVKNMFKKAGKAMGMD.

Residues 5–70 form the J domain; it reads DYYEVLGVSR…EKRARYDRFG (66 aa). The CR-type zinc finger occupies 136-214; sequence GDEVTLRIPK…CRGAGQVQDI (79 aa). Cysteine 149, cysteine 152, cysteine 166, cysteine 169, cysteine 188, cysteine 191, cysteine 202, and cysteine 205 together coordinate Zn(2+). 4 CXXCXGXG motif repeats span residues 149 to 156, 166 to 173, 188 to 195, and 202 to 209; these read CPDCSGSG, CPQCGGSG, CSACRGEG, and CPRCRGAG.

It belongs to the DnaJ family. As to quaternary structure, homodimer. It depends on Zn(2+) as a cofactor.

Its subcellular location is the cytoplasm. Functionally, participates actively in the response to hyperosmotic and heat shock by preventing the aggregation of stress-denatured proteins and by disaggregating proteins, also in an autonomous, DnaK-independent fashion. Unfolded proteins bind initially to DnaJ; upon interaction with the DnaJ-bound protein, DnaK hydrolyzes its bound ATP, resulting in the formation of a stable complex. GrpE releases ADP from DnaK; ATP binding to DnaK triggers the release of the substrate protein, thus completing the reaction cycle. Several rounds of ATP-dependent interactions between DnaJ, DnaK and GrpE are required for fully efficient folding. Also involved, together with DnaK and GrpE, in the DNA replication of plasmids through activation of initiation proteins. This Oleidesulfovibrio alaskensis (strain ATCC BAA-1058 / DSM 17464 / G20) (Desulfovibrio alaskensis) protein is Chaperone protein DnaJ.